The chain runs to 198 residues: Imidazoleglycerol-phosphate dehydratase (198 aa).

It belongs to the imidazoleglycerol-phosphate dehydratase family.

The protein resides in the cytoplasm. The catalysed reaction is D-erythro-1-(imidazol-4-yl)glycerol 3-phosphate = 3-(imidazol-4-yl)-2-oxopropyl phosphate + H2O. It participates in amino-acid biosynthesis; L-histidine biosynthesis; L-histidine from 5-phospho-alpha-D-ribose 1-diphosphate: step 6/9. This chain is Imidazoleglycerol-phosphate dehydratase, found in Herminiimonas arsenicoxydans.